The following is a 178-amino-acid chain: Protein GrpE (178 aa).

It belongs to the GrpE family. As to quaternary structure, homodimer.

The protein localises to the cytoplasm. Participates actively in the response to hyperosmotic and heat shock by preventing the aggregation of stress-denatured proteins, in association with DnaK and GrpE. It is the nucleotide exchange factor for DnaK and may function as a thermosensor. Unfolded proteins bind initially to DnaJ; upon interaction with the DnaJ-bound protein, DnaK hydrolyzes its bound ATP, resulting in the formation of a stable complex. GrpE releases ADP from DnaK; ATP binding to DnaK triggers the release of the substrate protein, thus completing the reaction cycle. Several rounds of ATP-dependent interactions between DnaJ, DnaK and GrpE are required for fully efficient folding. This is Protein GrpE from Bordetella avium (strain 197N).